The sequence spans 160 residues: SsrA-binding protein (160 aa).

Belongs to the SmpB family.

It is found in the cytoplasm. Required for rescue of stalled ribosomes mediated by trans-translation. Binds to transfer-messenger RNA (tmRNA), required for stable association of tmRNA with ribosomes. tmRNA and SmpB together mimic tRNA shape, replacing the anticodon stem-loop with SmpB. tmRNA is encoded by the ssrA gene; the 2 termini fold to resemble tRNA(Ala) and it encodes a 'tag peptide', a short internal open reading frame. During trans-translation Ala-aminoacylated tmRNA acts like a tRNA, entering the A-site of stalled ribosomes, displacing the stalled mRNA. The ribosome then switches to translate the ORF on the tmRNA; the nascent peptide is terminated with the 'tag peptide' encoded by the tmRNA and targeted for degradation. The ribosome is freed to recommence translation, which seems to be the essential function of trans-translation. The sequence is that of SsrA-binding protein from Cronobacter sakazakii (strain ATCC BAA-894) (Enterobacter sakazakii).